We begin with the raw amino-acid sequence, 454 residues long: Tyrosine aminotransferase (454 aa).

M1 is modified (N-acetylmethionine). The residue at position 280 (K280) is an N6-(pyridoxal phosphate)lysine. S448 is subject to Phosphoserine.

It belongs to the class-I pyridoxal-phosphate-dependent aminotransferase family. As to quaternary structure, homodimer. The cofactor is pyridoxal 5'-phosphate.

It carries out the reaction L-tyrosine + 2-oxoglutarate = 3-(4-hydroxyphenyl)pyruvate + L-glutamate. It participates in amino-acid degradation; L-phenylalanine degradation; acetoacetate and fumarate from L-phenylalanine: step 2/6. Functionally, transaminase involved in tyrosine breakdown. Converts tyrosine to p-hydroxyphenylpyruvate. Can catalyze the reverse reaction, using glutamic acid, with 2-oxoglutarate as cosubstrate (in vitro). Has much lower affinity and transaminase activity towards phenylalanine. This chain is Tyrosine aminotransferase (TAT), found in Homo sapiens (Human).